The chain runs to 742 residues: MTTIKTSNLGFPRLGRKREWKKAIESYWAKKISKEELDQTLTDLHKENLLLQKYYHLDSIPVGDFSLYDHILDTSLLFNIIPERFQGRTIDDDLLFDIARGNKDHVASALIKWFNTNYHYIVPEWDNVEPKVSRNVLLDRFKYAQSLNVNAHPVIVGPITFVKLSKGGHQTFEEKVKTLLPLYKEVFESLIDAGAEYIQVDEPILVTDDSESYENITREAYDYFEKASVAKKLVIQTYFERAHLKFLSSLPVGGLGLDFVHDNGYNLKQIEAGDFDKSKTLYAGIIDGRNVWASDIEAKKVLIDKLLAHTNELVIQPSSSLLHVPVSLDDETLDTSVGEGLSFATEKLDELDALRRLFNQNDNFKYDKLKARYERFQNQSFKNLDYDFESVRTSRQSPFAQRIEQQQKRLNLPDLPTTTIGSFPQSREVRKYRADWKNKRITDEAYETFLKNEIARWIKIQEDIGLDVLVHGEFERNDMVEFFGEKLQGFLVTKFGWVQSYGSRAVKPPIIYGDVKWTAPLTVDETVYAQSLTDKPVKGMLTGPVTILNWSFERVDLPRKVVQDQIALAINEEVLALEAAGIKVIQVDEPALREGLPLRSEYHEQYLKDAVLSFKLATSSVRDETQIHTHMCYSQFGQIIHAIHDLDADVISIETSRSHGDLIKDFEDINYDLGIGLGVYDIHSPRIPTKEEITTAINRSLQQIDRSLFWVNPDCGLKTRKEEEVKDALTVLVNAVKAKRQE.

5-methyltetrahydropteroyltri-L-glutamate contacts are provided by residues 18 to 21 and Lys-112; that span reads REWK. L-homocysteine is bound by residues 420–422 and Glu-473; that span reads IGS. L-methionine-binding positions include 420-422 and Glu-473; that span reads IGS. Trp-550 serves as a coordination point for 5-methyltetrahydropteroyltri-L-glutamate. Asp-588 is an L-homocysteine binding site. Residue Asp-588 coordinates L-methionine. Glu-594 lines the 5-methyltetrahydropteroyltri-L-glutamate pocket. Residues His-630, Cys-632, and Glu-654 each contribute to the Zn(2+) site. His-683 acts as the Proton donor in catalysis. A Zn(2+)-binding site is contributed by Cys-715.

This sequence belongs to the vitamin-B12 independent methionine synthase family. The cofactor is Zn(2+).

The catalysed reaction is 5-methyltetrahydropteroyltri-L-glutamate + L-homocysteine = tetrahydropteroyltri-L-glutamate + L-methionine. It functions in the pathway amino-acid biosynthesis; L-methionine biosynthesis via de novo pathway; L-methionine from L-homocysteine (MetE route): step 1/1. Its function is as follows. Catalyzes the transfer of a methyl group from 5-methyltetrahydrofolate to homocysteine resulting in methionine formation. In Staphylococcus aureus (strain bovine RF122 / ET3-1), this protein is 5-methyltetrahydropteroyltriglutamate--homocysteine methyltransferase.